The following is a 588-amino-acid chain: Progranulin (588 aa).

Positions 1 to 17 (MWILVSWLALVARLVAG) are cleaved as a signal peptide. Asn-38 is a glycosylation site (N-linked (GlcNAc...) asparagine). 12 disulfides stabilise this stretch: Cys-125–Cys-138, Cys-132–Cys-148, Cys-281–Cys-293, Cys-287–Cys-303, Cys-294–Cys-311, Cys-304–Cys-318, Cys-312–Cys-325, Cys-319–Cys-332, Cys-363–Cys-375, Cys-369–Cys-385, Cys-394–Cys-407, and Cys-401–Cys-413. Asn-372 is a glycosylation site (N-linked (GlcNAc...) asparagine). Asn-525 carries an N-linked (GlcNAc...) asparagine glycan.

This sequence belongs to the granulin family. In terms of assembly, progranulin is secreted as a homodimer. Interacts with SLPI; interaction protects progranulin from proteolysis. Interacts (via region corresponding to granulin-7 peptide) with CTSD; stabilizes CTSD and increases its proteolytic activity. Interacts (via region corresponding to granulin-7 peptide) with SORT1; this interaction mediates endocytosis and lysosome delivery of progranulin; interaction occurs at the neuronal cell surface in a stressed nervous system. Interacts with PSAP; facilitates lysosomal delivery of progranulin from the extracellular space and the biosynthetic pathway. Forms a complex with PSAP and M6PR; PSAP bridges the binding between progranulin and M6PR. Forms a complex with PSAP and SORT1; progranulin bridges the interaction between PSAP and SORT1; facilitates lysosomal targeting of PSAP via SORT1; interaction enhances PSAP uptake in primary cortical neurons. Interacts (via regions corresponding to granulin-2 and granulin-7 peptides) with GBA1; this interaction prevents aggregation of GBA1-SCARB2 complex via interaction with HSPA1A upon stress. Interacts (via region corresponding to granulin-7 peptide) with HSPA1A; mediates recruitment of HSPA1A to GBA1 and prevents GBA1 aggregation in response to stress. In terms of processing, cleaved by ELANE; proteolysis is blocked by SLPI and is concentration- and time-dependent and induces CXCL8/IL-8 production; granulin-3 and granulin-4 are resistant to ELANE. Cleaved by CTSL in lysosome thus regulating the maturation and turnover of progranulin within the lysosome. As to expression, ubiquitous; most abundant in the spleen and several tissues of endocrine significance.

The protein resides in the secreted. It is found in the lysosome. Secreted protein that acts as a key regulator of lysosomal function and as a growth factor involved in inflammation, wound healing and cell proliferation. Regulates protein trafficking to lysosomes, and also the activity of lysosomal enzymes. Also facilitates the acidification of lysosomes, causing degradation of mature CTSD by CTSB. In addition, functions as a wound-related growth factor that acts directly on dermal fibroblasts and endothelial cells to promote division, migration and the formation of capillary-like tubule structures. Also promotes epithelial cell proliferation by blocking TNF-mediated neutrophil activation preventing release of oxidants and proteases. Moreover, modulates inflammation in neurons by preserving neurons survival, axonal outgrowth and neuronal integrity. Functionally, inhibits epithelial cell proliferation and induces epithelial cells to secrete IL-8. In terms of biological role, stabilizes CTSD through interaction with CTSD leading to maintain its aspartic-type peptidase activity. This Rattus norvegicus (Rat) protein is Progranulin (Grn).